The following is a 386-amino-acid chain: Bifunctional enzyme IspD/IspF (386 aa).

The segment at 1–231 (MKNGAVIIPA…REKKEPMQKI (231 aa)) is 2-C-methyl-D-erythritol 4-phosphate cytidylyltransferase. Residues 232–386 (RIGHGFDAHQ…SCHAVVLLQQ (155 aa)) are 2-C-methyl-D-erythritol 2,4-cyclodiphosphate synthase. The a divalent metal cation site is built by aspartate 238 and histidine 240. 4-CDP-2-C-methyl-D-erythritol 2-phosphate contacts are provided by residues 238 to 240 (DAH) and 264 to 265 (HS). An a divalent metal cation-binding site is contributed by histidine 272. 4-CDP-2-C-methyl-D-erythritol 2-phosphate contacts are provided by residues 286–288 (DIG), 362–365 (TTTE), tyrosine 369, and arginine 372.

It in the N-terminal section; belongs to the IspD/TarI cytidylyltransferase family. IspD subfamily. The protein in the C-terminal section; belongs to the IspF family. The cofactor is a divalent metal cation.

The catalysed reaction is 2-C-methyl-D-erythritol 4-phosphate + CTP + H(+) = 4-CDP-2-C-methyl-D-erythritol + diphosphate. It carries out the reaction 4-CDP-2-C-methyl-D-erythritol 2-phosphate = 2-C-methyl-D-erythritol 2,4-cyclic diphosphate + CMP. It functions in the pathway isoprenoid biosynthesis; isopentenyl diphosphate biosynthesis via DXP pathway; isopentenyl diphosphate from 1-deoxy-D-xylulose 5-phosphate: step 2/6. Its pathway is isoprenoid biosynthesis; isopentenyl diphosphate biosynthesis via DXP pathway; isopentenyl diphosphate from 1-deoxy-D-xylulose 5-phosphate: step 4/6. In terms of biological role, bifunctional enzyme that catalyzes the formation of 4-diphosphocytidyl-2-C-methyl-D-erythritol from CTP and 2-C-methyl-D-erythritol 4-phosphate (MEP) (IspD), and catalyzes the conversion of 4-diphosphocytidyl-2-C-methyl-D-erythritol 2-phosphate (CDP-ME2P) to 2-C-methyl-D-erythritol 2,4-cyclodiphosphate (ME-CPP) with a corresponding release of cytidine 5-monophosphate (CMP) (IspF). The sequence is that of Bifunctional enzyme IspD/IspF from Desulfotalea psychrophila (strain LSv54 / DSM 12343).